The primary structure comprises 134 residues: Salivary protein 15 Iric-1 (134 aa).

A signal peptide spans 1 to 21 (MESFVAMKVVCITVLFVIVAV). N-linked (GlcNAc...) asparagine glycosylation occurs at Asn22. The tract at residues 48–67 (PSYIRNPQKLALELLEICKN) is required for Borrelia OspC-binding. N-linked (GlcNAc...) asparagine glycans are attached at residues Asn91 and Asn103. The tract at residues 115–134 (GPNGETCAEKSKCVGHIPGC) is CD4-binding.

Belongs to the salp15 family. In terms of assembly, monomer. Interacts with host CD4. Interacts with host DC-SIGN (CD209). (Microbial infection) Interacts with Borrelia outer surface protein C (OspC). As to expression, expressed in salivary glands. Detected in fed adult female.

The protein resides in the secreted. Functionally, salivary tick protein that downregulates host immune system by binding to both dendritic cells, and CD4(+) T cells. Specifically binds to the CD4 coreceptor on T cells. This interaction prevents the activation of the Src kinase, Lck, and its downstream substrate Zap-70, and results in deficient activation of PLCgamma1, the repression of calcium fluxes triggered by T-cell antigen receptor (TCR) ligation, and a subsequent reduction in interleukin-2 production. This salivary protein also binds to DC-SIGN (CD209) on dendritic cells (DC) and activates the Raf-1 kinase/MEK signaling pathway that results in down-regulating expression of pro-inflammatory cytokines. Furthermore, it inhibits T cell proliferation induced by DCs. In addition, it inhibits in vitro keratinocyte inflammation induced by Borrelia burgdorferi or by the major outer surface protein (OspC) of Borrelia. In addition, it downregulates chemokines and monocyte chemoattractant protein 1, as well as several antimicrobial peptides such as defensins, cathelicidin, psoriasin, and RNase 7. Apart from its immunomodulatory activities, it is also associated with protection of Borrelia spirochetes from antibody-mediated killing through its binding to OspC. In vivo, tests on different immune disease animal models show promising therapeutic results, e.g., in inhibiting HIV infection, experimental autoimmune encephalomyelitis, transplantation rejection, and asthma. (Microbial infection) Protects Borrelia garinii (strain VSBP) from host complement-mediated killing by binding to the surface of spirochetes and preventing deposition of host C5b-9 membrane attack complexes. Protects Borrelia garinii (strain A87S) from host complement-mediated killing. Its function is as follows. (Microbial infection) Partially protects Borrelia burgdorferi (strains VS215 and B31) from host complement-mediated killing. This chain is Salivary protein 15 Iric-1, found in Ixodes ricinus (Common tick).